Reading from the N-terminus, the 589-residue chain is Guanylate-binding protein 1 (589 aa).

Residues 1 to 309 are GTPase domain (Globular); that stretch reads MASEIHMSEP…SAICSGELPC (309 aa). One can recognise a GB1/RHD3-type G domain in the interval 35–276; sequence TQPVVVVAIV…FTSYIFSYSG (242 aa). GTP is bound by residues 47-53, 67-69, and 97-101; these read YRTGKSY, LGS, and DTEGL. S156 carries the phosphoserine modification. A Cysteine methyl ester modification is found at C586. C586 carries the S-farnesyl cysteine lipid modification. Residue C586 is the site of S-geranylgeranyl cysteine; partial attachment. T587 is modified (phosphothreonine). A propeptide spans 587-589 (removed in mature form); that stretch reads TIL.

The protein belongs to the TRAFAC class dynamin-like GTPase superfamily. GB1/RHD3 GTPase family. GB1 subfamily. In terms of assembly, homodimer; homodimerization occurs upon GTP-binding and is required for the second hydrolysis step from GDP to GMP. Undergoes conformational changes and oligomerization upon GTP-binding and hydrolysis. Heterodimer with other family members, including GBP2, GBP3, GBP4 and GBP5. Dimerization regulates subcellular location to membranous structures. Interacts with SQSTM1. Interacts (when phosphorylated) with 14-3-3 protein sigma (SFN); leading to GBP1 retention in the cytosol and inactivation. Isoprenylation of mouse GBP1 is incomplete. It persistently exists in the cell as a mixture of C20-modified and (more predominantly) unmodified form. Isoprenylation is required for proper subcellular location. In terms of processing, phosphorylated at Ser-156 by PIM1 in absence of infection, inhibits GBP1: phosphorylation promotes interaction with 14-3-3 protein sigma (SFN), leading to GBP1 retention in the cytosol. Dephosphorylated in response to infection, liberating GBP1.

The protein localises to the cytoplasmic vesicle membrane. It localises to the golgi apparatus membrane. Its subcellular location is the cell membrane. It is found in the cytoplasm. The protein resides in the cytosol. The protein localises to the secreted. It catalyses the reaction GTP + H2O = GDP + phosphate + H(+). It carries out the reaction GDP + H2O = GMP + phosphate + H(+). In terms of biological role, interferon (IFN)-inducible GTPase that plays important roles in innate immunity against a diverse range of bacterial, viral and protozoan pathogens. Hydrolyzes GTP to GMP in two consecutive cleavage reactions: GTP is first hydrolyzed to GDP and then to GMP in a processive manner. Following infection, recruited to the pathogen-containing vacuoles or vacuole-escaped bacteria and promotes both inflammasome assembly and autophagy. Acts as a positive regulator of inflammasome assembly by facilitating the detection of inflammasome ligands from pathogens. Involved in the lysis of pathogen-containing vacuoles, releasing pathogens into the cytosol. Following pathogen release in the cytosol, forms a protein coat in a GTPase-dependent manner that encapsulates pathogens and promotes the detection of ligands by pattern recognition receptors. Plays a key role in inflammasome assembly in response to infection by Gram-negative bacteria: following pathogen release in the cytosol, forms a protein coat that encapsulates Gram-negative bacteria and directly binds to lipopolysaccharide (LPS), disrupting the O-antigen barrier and unmasking lipid A that is that detected by the non-canonical inflammasome effector CASP4/CASP11. Also promotes recruitment of proteins that mediate bacterial cytolysis, leading to release double-stranded DNA (dsDNA) that activates the AIM2 inflammasome. Involved in autophagy by regulating bacteriolytic peptide generation via its interaction with ubiquitin-binding protein SQSTM1, which delivers monoubiquitinated proteins to autolysosomes for the generation of bacteriolytic peptides. Confers protection to several pathogens, including the bacterial pathogens L.monocytogenes and M.bovis BCG as well as the protozoan pathogen T.gondii. Exhibits antiviral activity against influenza virus. The chain is Guanylate-binding protein 1 (Gbp1) from Mus musculus (Mouse).